The sequence spans 215 residues: Large ribosomal subunit protein uL3 (215 aa).

Residues 136 to 155 (GVSISHRSHGSTGQRQDPGK) are disordered. The residue at position 151 (Q151) is an N5-methylglutamine.

Belongs to the universal ribosomal protein uL3 family. In terms of assembly, part of the 50S ribosomal subunit. Forms a cluster with proteins L14 and L19. In terms of processing, methylated by PrmB.

In terms of biological role, one of the primary rRNA binding proteins, it binds directly near the 3'-end of the 23S rRNA, where it nucleates assembly of the 50S subunit. The sequence is that of Large ribosomal subunit protein uL3 from Rickettsia typhi (strain ATCC VR-144 / Wilmington).